Consider the following 422-residue polypeptide: L-threonine dehydratase biosynthetic IlvA (422 aa).

At Lys56 the chain carries N6-(pyridoxal phosphate)lysine. Residues Asn83, 189-193, and Ser315 contribute to the pyridoxal 5'-phosphate site; that span reads GGGGL. Residues 339 to 413 form the ACT-like domain; the sequence is HYFILNFPQR…FDPSNIYINE (75 aa).

The protein belongs to the serine/threonine dehydratase family. In terms of assembly, homotetramer. Pyridoxal 5'-phosphate serves as cofactor.

The enzyme catalyses L-threonine = 2-oxobutanoate + NH4(+). It functions in the pathway amino-acid biosynthesis; L-isoleucine biosynthesis; 2-oxobutanoate from L-threonine: step 1/1. Its function is as follows. Catalyzes the anaerobic formation of alpha-ketobutyrate and ammonia from threonine in a two-step reaction. The first step involved a dehydration of threonine and a production of enamine intermediates (aminocrotonate), which tautomerizes to its imine form (iminobutyrate). Both intermediates are unstable and short-lived. The second step is the nonenzymatic hydrolysis of the enamine/imine intermediates to form 2-ketobutyrate and free ammonia. In the low water environment of the cell, the second step is accelerated by RidA. The protein is L-threonine dehydratase biosynthetic IlvA (ilvA) of Staphylococcus epidermidis (strain ATCC 12228 / FDA PCI 1200).